Consider the following 198-residue polypeptide: MAQINPLPVPLGPWKITVYDQENFQGKRMEFTSSCTNIMECGFDNIRSLKVECGAWIGYEHTSFCGQQFVLERGEYPPWDAWSATNAYHIERLMSFRPICSANHKESKLVIFEKENFIGRQWELRDDYPSLQAMGWGNNEVGSMKVQCGAWVCYQYPGYRGYQYILESDHHGGEYKHWREWGSHAQTFQIQSIRRIQQ.

The tract at residues 1–13 (MAQINPLPVPLGP) is N-terminal arm. Beta/gamma crystallin 'Greek key' domains are found at residues 14 to 53 (WKIT…KVEC) and 54 to 100 (GAWI…RPIC). Residues 101–106 (SANHKE) form a connecting peptide region. 2 consecutive Beta/gamma crystallin 'Greek key' domains span residues 107 to 148 (SKLV…KVQC) and 149 to 197 (GAWV…RRIQ).

This sequence belongs to the beta/gamma-crystallin family. As to quaternary structure, homo/heterodimer, or complexes of higher-order. The structure of beta-crystallin oligomers seems to be stabilized through interactions between the N-terminal arms. The N-terminus is blocked.

In terms of biological role, crystallins are the dominant structural components of the vertebrate eye lens. The sequence is that of Beta-crystallin A1-1 from Aquarana catesbeiana (American bullfrog).